We begin with the raw amino-acid sequence, 561 residues long: SUN domain-containing protein 5 (561 aa).

The chain crosses the membrane as a helical span at residues 36–56 (GSFFERSISLVLLLWCFLFLV). Residues 158-318 (NGSSQLVNNG…SVVEVFGIDA (161 aa)) enclose the SUN domain. A disordered region spans residues 345-367 (ADEKQDGEIKSNRTDQIGKETEA). Residues 454 to 499 (MEKELRDLELWKTLVASRVESLARGNSALRLDVEKIVKEQANLESK) are a coiled coil. Helical transmembrane passes span 501 to 521 (LGVLLISLFFVVLATIRLVST) and 540 to 560 (PDSGWVMILLSSSIMIFIHLL).

In terms of assembly, forms homomers. Interacts with SUN3 and TIK.

It is found in the membrane. Its function is as follows. Encodes a member of the mid-SUN subfamily of SUN-domain proteins. It is involved in early seed development and nuclear morphology. [TAIR]. The sequence is that of SUN domain-containing protein 5 from Arabidopsis thaliana (Mouse-ear cress).